An 80-amino-acid chain; its full sequence is Cell division protein ZapB (80 aa).

The stretch at 3-80 forms a coiled coil; it reads FEVLEKLEAK…ALLGKMEDVE (78 aa).

This sequence belongs to the ZapB family. Homodimer. The ends of the coiled-coil dimer bind to each other, forming polymers. Interacts with FtsZ.

The protein localises to the cytoplasm. Non-essential, abundant cell division factor that is required for proper Z-ring formation. It is recruited early to the divisome by direct interaction with FtsZ, stimulating Z-ring assembly and thereby promoting cell division earlier in the cell cycle. Its recruitment to the Z-ring requires functional FtsA or ZipA. The polypeptide is Cell division protein ZapB (Vibrio vulnificus (strain CMCP6)).